The chain runs to 396 residues: Ribose-phosphate pyrophosphokinase 1, chloroplastic (396 aa).

Residues 1–36 (MPLSYSAAAAAAPSPLAARSRGLLRRPPRSSPVVVR) constitute a chloroplast transit peptide. Positions 204, 206, 215, and 219 each coordinate Mg(2+). Positions 290 to 305 (GKVAVMMDDMIDTAGT) are binding of phosphoribosylpyrophosphate.

The protein belongs to the ribose-phosphate pyrophosphokinase family. Requires Mg(2+) as cofactor.

It is found in the plastid. The protein resides in the chloroplast. It carries out the reaction D-ribose 5-phosphate + ATP = 5-phospho-alpha-D-ribose 1-diphosphate + AMP + H(+). In Oryza sativa subsp. japonica (Rice), this protein is Ribose-phosphate pyrophosphokinase 1, chloroplastic.